The chain runs to 243 residues: Phosphate-specific transport system accessory protein PhoU (243 aa).

It belongs to the PhoU family. As to quaternary structure, homodimer.

The protein localises to the cytoplasm. Functionally, part of the phosphate (Pho) regulon, which plays a key role in phosphate homeostasis. Encoded together with proteins of the phosphate-specific transport (Pst) system in the polycistronic pstSCAB-phoU operon. PhoU is essential for the repression of the Pho regulon at high phosphate conditions. In this role, it may bind, possibly as a chaperone, to PhoR, PhoB or a PhoR-PhoB complex to promote dephosphorylation of phospho-PhoB, or inhibit formation of the PhoR-PhoB transitory complex. This is Phosphate-specific transport system accessory protein PhoU from Serratia marcescens.